The chain runs to 847 residues: Nitrite reductase (NADH) large subunit (847 aa).

44–79 serves as a coordination point for FAD; it reads YDRVHLSSYFSHHTAEELSLVREGFYEKHGIKVLVG. NAD(+) is bound at residue 193–225; that stretch reads LRRKIESMGVRVHTSKNTLEIVQEGVEARKTMR. The [2Fe-2S] cluster site is built by cysteine 425, cysteine 427, cysteine 459, and cysteine 462. Positions 641, 647, 681, and 685 each coordinate [4Fe-4S] cluster. Cysteine 685 contacts siroheme.

It belongs to the nitrite and sulfite reductase 4Fe-4S domain family. As to quaternary structure, homodimer which associates with NirD. It depends on siroheme as a cofactor. The cofactor is [2Fe-2S] cluster. [4Fe-4S] cluster is required as a cofactor. Requires FAD as cofactor.

The enzyme catalyses NH4(+) + 3 NAD(+) + 2 H2O = nitrite + 3 NADH + 5 H(+). The protein operates within nitrogen metabolism; nitrate reduction (assimilation). This chain is Nitrite reductase (NADH) large subunit (nirB), found in Escherichia coli (strain K12).